The following is a 313-amino-acid chain: Probable GTP 3',8-cyclase (313 aa).

The 221-residue stretch at Val4 to Arg224 folds into the Radical SAM core domain. Arg13 provides a ligand contact to GTP. The [4Fe-4S] cluster site is built by Cys20, Cys24, and Cys27. Lys60 is a binding site for GTP. Residue Gly64 coordinates S-adenosyl-L-methionine. Thr90 lines the GTP pocket. An S-adenosyl-L-methionine-binding site is contributed by Ser114. Position 151 (Lys151) interacts with GTP. 2 residues coordinate [4Fe-4S] cluster: Cys244 and Cys247. Residue Arg249–Arg251 participates in GTP binding. Residue Cys261 participates in [4Fe-4S] cluster binding.

This sequence belongs to the radical SAM superfamily. MoaA family. [4Fe-4S] cluster is required as a cofactor.

The catalysed reaction is GTP + AH2 + S-adenosyl-L-methionine = (8S)-3',8-cyclo-7,8-dihydroguanosine 5'-triphosphate + 5'-deoxyadenosine + L-methionine + A + H(+). The protein operates within cofactor biosynthesis; molybdopterin biosynthesis. Functionally, catalyzes the cyclization of GTP to (8S)-3',8-cyclo-7,8-dihydroguanosine 5'-triphosphate. This is Probable GTP 3',8-cyclase from Sulfolobus acidocaldarius (strain ATCC 33909 / DSM 639 / JCM 8929 / NBRC 15157 / NCIMB 11770).